Consider the following 445-residue polypeptide: Probable D-serine dehydratase (445 aa).

At Lys111 the chain carries N6-(pyridoxal phosphate)lysine.

The protein belongs to the serine/threonine dehydratase family. DsdA subfamily. Pyridoxal 5'-phosphate is required as a cofactor.

The enzyme catalyses D-serine = pyruvate + NH4(+). The protein is Probable D-serine dehydratase of Burkholderia pseudomallei (strain 668).